We begin with the raw amino-acid sequence, 65 residues long: MPKIKTRRSAAKRFSVTGSGKFRRRKQNLRHILTKKSAKRKMNLGQSAIVDATNEKAVRRMMPYA.

Positions 1–11 (MPKIKTRRSAA) are enriched in basic residues. Positions 1–25 (MPKIKTRRSAAKRFSVTGSGKFRRR) are disordered.

This sequence belongs to the bacterial ribosomal protein bL35 family.

In Nitratidesulfovibrio vulgaris (strain ATCC 29579 / DSM 644 / CCUG 34227 / NCIMB 8303 / VKM B-1760 / Hildenborough) (Desulfovibrio vulgaris), this protein is Large ribosomal subunit protein bL35.